Here is a 237-residue protein sequence, read N- to C-terminus: Methylosome subunit pICln (237 aa).

N-acetylserine is present on Ser2. 6 positions are modified to phosphoserine: Ser102, Ser144, Ser193, Ser195, Ser198, and Ser210. Residues 135 to 159 are disordered; sequence LHPDPEDEDSDDYDGEEYDVEAHEQ. The span at 139-153 shows a compositional bias: acidic residues; that stretch reads PEDEDSDDYDGEEYD. Phosphothreonine is present on Thr223.

The protein belongs to the pICln (TC 1.A.47) family. In terms of assembly, component of the methylosome, a 20S complex containing at least PRMT5/SKB1, WDR77/MEP50 and CLNS1A/pICln. May mediate SNRPD1 and SNRPD3 methylation. Forms a 6S pICln-Sm complex composed of CLNS1A/pICln, SNRPD1, SNRPD2, SNRPE, SNRPF and SNRPG; ring-like structure where CLNS1A/pICln mimics additional Sm proteins and which is unable to assemble into the core snRNP. Interacts with LSM10 and LSM11.

It is found in the cytoplasm. The protein resides in the cytosol. Its subcellular location is the nucleus. The protein localises to the cytoskeleton. Its function is as follows. Involved in both the assembly of spliceosomal snRNPs and the methylation of Sm proteins. Chaperone that regulates the assembly of spliceosomal U1, U2, U4 and U5 small nuclear ribonucleoproteins (snRNPs), the building blocks of the spliceosome, and thereby plays an important role in the splicing of cellular pre-mRNAs. Most spliceosomal snRNPs contain a common set of Sm proteins SNRPB, SNRPD1, SNRPD2, SNRPD3, SNRPE, SNRPF and SNRPG that assemble in a heptameric protein ring on the Sm site of the small nuclear RNA to form the core snRNP (Sm core). In the cytosol, the Sm proteins SNRPD1, SNRPD2, SNRPE, SNRPF and SNRPG are trapped in an inactive 6S pICln-Sm complex by the chaperone CLNS1A that controls the assembly of the core snRNP. Dissociation by the SMN complex of CLNS1A from the trapped Sm proteins and their transfer to an SMN-Sm complex triggers the assembly of core snRNPs and their transport to the nucleus. The chain is Methylosome subunit pICln (CLNS1A) from Homo sapiens (Human).